A 1520-amino-acid chain; its full sequence is DNA-directed RNA polymerase subunit beta'' (1520 aa).

Zn(2+) contacts are provided by Cys220, Cys296, Cys303, and Cys306. Basic and acidic residues-rich tracts occupy residues Thr645 to Glu654 and Pro664 to Glu674. Disordered regions lie at residues Thr645–Glu676 and Tyr705–Gly786. Composition is skewed to acidic residues over residues Gly730 to Asp748 and Thr756 to Asp779.

The protein belongs to the RNA polymerase beta' chain family. RpoC2 subfamily. In terms of assembly, in plastids the minimal PEP RNA polymerase catalytic core is composed of four subunits: alpha, beta, beta', and beta''. When a (nuclear-encoded) sigma factor is associated with the core the holoenzyme is formed, which can initiate transcription. Requires Zn(2+) as cofactor.

The protein resides in the plastid. It localises to the chloroplast. It catalyses the reaction RNA(n) + a ribonucleoside 5'-triphosphate = RNA(n+1) + diphosphate. Its function is as follows. DNA-dependent RNA polymerase catalyzes the transcription of DNA into RNA using the four ribonucleoside triphosphates as substrates. The protein is DNA-directed RNA polymerase subunit beta'' of Sorghum bicolor (Sorghum).